The chain runs to 769 residues: Serine/threonine-protein kinase PLK4 (769 aa).

Positions 10-263 (YEVYEILGKG…LDQVLQHPFM (254 aa)) constitute a Protein kinase domain. ATP is bound by residues 16–24 (LGKGGFASV) and Lys-39. The active-site Proton acceptor is Asp-134. Disordered regions lie at residues 280–304 (SSDS…SSYG), 337–380 (PQQR…LDIP), and 592–651 (APLT…VLSS). Polar residues predominate over residues 337 to 371 (PQQRPQSASHNKPTSDFFSGISNDPRTMAPSSPTK). A Cryptic POLO box 1 (CPB1) domain is found at 374 to 491 (KKRLDIPPLN…ARFVQMVKAK (118 aa)). The Cryptic POLO box 2 (CPB2) domain maps to 492-595 (TPKITYYSEK…GRRPANAPLT (104 aa)). A compositionally biased stretch (polar residues) spans 605–648 (TKENQLYSNISSPNTPQTPHQMPSFAMSTASHTSAGNPLTQRPV). The POLO box domain maps to 662–745 (AMKKCTIAGV…MPAILRELNA (84 aa)).

The protein belongs to the protein kinase superfamily. Ser/Thr protein kinase family. CDC5/Polo subfamily. In terms of assembly, homodimer. Ubiquitinated; leading to its degradation by the proteasome.

The protein localises to the cytoplasm. It localises to the cytoskeleton. Its subcellular location is the microtubule organizing center. The protein resides in the centrosome. It is found in the centriole. The enzyme catalyses L-seryl-[protein] + ATP = O-phospho-L-seryl-[protein] + ADP + H(+). The catalysed reaction is L-threonyl-[protein] + ATP = O-phospho-L-threonyl-[protein] + ADP + H(+). Functionally, serine/threonine-protein kinase that plays a central role in centriole duplication. Able to trigger procentriole formation on the surface of the mother centriole cylinder, leading to the recruitment of centriole biogenesis proteins. When overexpressed, it is able to induce centrosome amplification through the simultaneous generation of multiple procentrioles adjoining each parental centriole during S phase. The protein is Serine/threonine-protein kinase PLK4 (SAK) of Aedes aegypti (Yellowfever mosquito).